Here is a 206-residue protein sequence, read N- to C-terminus: Emopamil-binding protein-like (206 aa).

A run of 4 helical transmembrane segments spans residues 10 to 30 (EAGS…ALGL), 42 to 62 (WVLA…GAFV), 101 to 121 (LEIL…YAIV), and 165 to 185 (LWVY…LLLW). Residues 39 to 184 (VERWVLAWLC…LWVLIPGLLL (146 aa)) form the EXPERA domain.

This sequence belongs to the EBP family. Homodimer.

The protein resides in the endoplasmic reticulum membrane. Does not possess sterol isomerase activity and does not bind sigma ligands. The protein is Emopamil-binding protein-like (Ebpl) of Mus musculus (Mouse).